The primary structure comprises 276 residues: Streptothricin hydrolase (276 aa).

Cys176 acts as the Nucleophile in catalysis. Residues 250-276 form a disordered region; it reads PEAPAAAAAPAAGTGLSPAGPPPAPAR. Low complexity predominate over residues 252-267; it reads APAAAAAPAAGTGLSP.

The protein belongs to the isochorismatase family. In terms of assembly, homodimer. Requires Does not require a metal cofactor. as cofactor.

The catalysed reaction is streptothricin F + H2O = streptothricin F acid. Its function is as follows. Catalyzes the hydrolysis of the amide bond of streptolidine lactam, thereby conferring streptothricin (ST) resistance. Can hydrolyze streptothricin-F and streptothricin-D. However, this strain is believed to be a ST nonproducer, which raises the possibility that its true role may not be its involvement in self-resistance to STs. May catalyze the hydrolysis of naturally occurring cyclic amide compounds that are structurally related to STs. This Streptomyces noursei (Streptomyces albulus) protein is Streptothricin hydrolase (sttH).